Consider the following 181-residue polypeptide: 6,7-dimethyl-8-ribityllumazine synthase (181 aa).

5-amino-6-(D-ribitylamino)uracil-binding positions include Tyr27, 58–60 (ALE), and 87–89 (CVI). (2S)-2-hydroxy-3-oxobutyl phosphate is bound at residue 92-93 (ET). His95 acts as the Proton donor in catalysis. 5-amino-6-(D-ribitylamino)uracil is bound at residue Asn120. Arg134 is a binding site for (2S)-2-hydroxy-3-oxobutyl phosphate.

Belongs to the DMRL synthase family.

The enzyme catalyses (2S)-2-hydroxy-3-oxobutyl phosphate + 5-amino-6-(D-ribitylamino)uracil = 6,7-dimethyl-8-(1-D-ribityl)lumazine + phosphate + 2 H2O + H(+). The protein operates within cofactor biosynthesis; riboflavin biosynthesis; riboflavin from 2-hydroxy-3-oxobutyl phosphate and 5-amino-6-(D-ribitylamino)uracil: step 1/2. In terms of biological role, catalyzes the formation of 6,7-dimethyl-8-ribityllumazine by condensation of 5-amino-6-(D-ribitylamino)uracil with 3,4-dihydroxy-2-butanone 4-phosphate. This is the penultimate step in the biosynthesis of riboflavin. This Methylobacterium sp. (strain 4-46) protein is 6,7-dimethyl-8-ribityllumazine synthase.